The primary structure comprises 613 residues: Na(+)/H(+) antiporter NhaA 1 (613 aa).

Residues 1-23 form a disordered region; that stretch reads MTEASARTIGPLPSRFSRDPKTP. Positions 1-408 are na(+)/H(+) antiporter NhaA; the sequence is MTEASARTIG…DPARQDEARV (408 aa). Helical transmembrane passes span 29 to 49, 81 to 101, 110 to 130, 138 to 158, 168 to 188, 191 to 211, 231 to 251, 300 to 320, 337 to 357, 377 to 397, and 408 to 428; these read AAAALLLAFTVLAILWANSPW, GLMAFFFFIVGLEVKSEFVIG, AVPVVAAIAGLIVPAVIFLTF, QAWGVVISTDTAFLVGALAVI, IFLLTLAVVDDVGALGAIALF, DDLKLAPLAVAALLIAALAMV, IALYLAHVHPTLAGVAVAVLI, AVGPYVSFVVLPIFALANAGV, WGIVAGLVVGKFVGITAATAL, GGAALSGIGFTISLFIVDVAI, and VGVLIASVLAFTLSWALFRIT. Positions 409 to 613 constitute a Thioredoxin domain; sequence GVLIASVLAF…SLIRALEAGR (205 aa).

This sequence in the N-terminal section; belongs to the NhaA Na(+)/H(+) (TC 2.A.33) antiporter family.

The protein localises to the cell membrane. It catalyses the reaction Na(+)(in) + 2 H(+)(out) = Na(+)(out) + 2 H(+)(in). Its function is as follows. Na(+)/H(+) antiporter that extrudes sodium in exchange for external protons. The protein is Na(+)/H(+) antiporter NhaA 1 of Mycobacterium sp. (strain KMS).